Consider the following 539-residue polypeptide: Phosphoenolpyruvate carboxykinase (ATP) (539 aa).

Positions 61, 195, and 201 each coordinate substrate. ATP-binding positions include Lys-201, His-220, and 238-246 (GLSGTGKTT). Mn(2+) is bound by residues Lys-201 and His-220. Asp-259 provides a ligand contact to Mn(2+). ATP is bound by residues Glu-287, Arg-325, and Thr-450. Arg-325 contacts substrate.

Belongs to the phosphoenolpyruvate carboxykinase (ATP) family. Mn(2+) serves as cofactor.

The protein localises to the cytoplasm. It catalyses the reaction oxaloacetate + ATP = phosphoenolpyruvate + ADP + CO2. It functions in the pathway carbohydrate biosynthesis; gluconeogenesis. In terms of biological role, involved in the gluconeogenesis. Catalyzes the conversion of oxaloacetate (OAA) to phosphoenolpyruvate (PEP) through direct phosphoryl transfer between the nucleoside triphosphate and OAA. This chain is Phosphoenolpyruvate carboxykinase (ATP), found in Methylobacterium radiotolerans (strain ATCC 27329 / DSM 1819 / JCM 2831 / NBRC 15690 / NCIMB 10815 / 0-1).